The primary structure comprises 195 residues: FMN-dependent NADH:quinone oxidoreductase (195 aa).

Residues serine 10, 16–18, 91–94, and 135–138 each bind FMN; these read SQS, MYNF, and TRGG.

This sequence belongs to the azoreductase type 1 family. In terms of assembly, homodimer. It depends on FMN as a cofactor.

It carries out the reaction 2 a quinone + NADH + H(+) = 2 a 1,4-benzosemiquinone + NAD(+). It catalyses the reaction N,N-dimethyl-1,4-phenylenediamine + anthranilate + 2 NAD(+) = 2-(4-dimethylaminophenyl)diazenylbenzoate + 2 NADH + 2 H(+). Quinone reductase that provides resistance to thiol-specific stress caused by electrophilic quinones. Functionally, also exhibits azoreductase activity. Catalyzes the reductive cleavage of the azo bond in aromatic azo compounds to the corresponding amines. This Vibrio vulnificus (strain YJ016) protein is FMN-dependent NADH:quinone oxidoreductase.